We begin with the raw amino-acid sequence, 288 residues long: Shikimate dehydrogenase (NADP(+)) (288 aa).

Shikimate-binding positions include 14 to 16 and Thr-63; that span reads SIS. Catalysis depends on Lys-67, which acts as the Proton acceptor. An NADP(+)-binding site is contributed by Glu-79. Shikimate contacts are provided by Asn-88 and Asp-103. NADP(+)-binding positions include 127-131, 151-156, and Met-219; these read GSGGA and NRTYEK. Tyr-221 contacts shikimate. Position 242 (Gly-242) interacts with NADP(+).

This sequence belongs to the shikimate dehydrogenase family. In terms of assembly, homodimer.

It catalyses the reaction shikimate + NADP(+) = 3-dehydroshikimate + NADPH + H(+). The protein operates within metabolic intermediate biosynthesis; chorismate biosynthesis; chorismate from D-erythrose 4-phosphate and phosphoenolpyruvate: step 4/7. In terms of biological role, involved in the biosynthesis of the chorismate, which leads to the biosynthesis of aromatic amino acids. Catalyzes the reversible NADPH linked reduction of 3-dehydroshikimate (DHSA) to yield shikimate (SA). The sequence is that of Shikimate dehydrogenase (NADP(+)) from Caldicellulosiruptor bescii (strain ATCC BAA-1888 / DSM 6725 / KCTC 15123 / Z-1320) (Anaerocellum thermophilum).